A 426-amino-acid polypeptide reads, in one-letter code: Riboflavin biosynthesis protein PYRD, chloroplastic (426 aa).

Residues 1–61 constitute a chloroplast transit peptide; the sequence is MQISCLPISI…SQTGFSNPVL (61 aa). The region spanning 72–194 is the CMP/dCMP-type deaminase domain; it reads VDDSFYMRKC…RLKDAGIDVT (123 aa). H121 provides a ligand contact to Zn(2+). Catalysis depends on E123, which acts as the Proton donor. Positions 146 and 155 each coordinate Zn(2+).

The cofactor is Zn(2+).

It is found in the plastid. The protein localises to the chloroplast. It carries out the reaction 2,5-diamino-6-hydroxy-4-(5-phosphoribosylamino)-pyrimidine + H2O + H(+) = 5-amino-6-(5-phospho-D-ribosylamino)uracil + NH4(+). It participates in cofactor biosynthesis; riboflavin biosynthesis; 5-amino-6-(D-ribitylamino)uracil from GTP: step 2/4. Monofunctional pyrimidine deaminase involved in the riboflavin biosynthesis pathway. Also has a reductase domain that lacks catalytically essential substrate-binding residues. The protein is Riboflavin biosynthesis protein PYRD, chloroplastic (PYRD) of Arabidopsis thaliana (Mouse-ear cress).